A 353-amino-acid chain; its full sequence is Photosystem II D2 protein (353 aa).

An N-acetylthreonine modification is found at threonine 2. Threonine 2 carries the phosphothreonine modification. A helical transmembrane segment spans residues 41–61 (CAYFAVGGWFTGTTFVTSWYT). Chlorophyll a is bound at residue histidine 118. A helical membrane pass occupies residues 125–141 (GFMLRQFELARSVQLRP). Glutamine 130 and asparagine 143 together coordinate pheophytin a. The chain crosses the membrane as a helical span at residues 153–166 (VFVSVFLIYPLGQS). Position 198 (histidine 198) interacts with chlorophyll a. The chain crosses the membrane as a helical span at residues 208 to 228 (AALLCAIHGATVENTLFEDGD). 2 residues coordinate a plastoquinone: histidine 215 and phenylalanine 262. Histidine 215 provides a ligand contact to Fe cation. Histidine 269 contacts Fe cation. Residues 279-295 (GLWMSALGVVGLALNLR) traverse the membrane as a helical segment.

It belongs to the reaction center PufL/M/PsbA/D family. In terms of assembly, PSII is composed of 1 copy each of membrane proteins PsbA, PsbB, PsbC, PsbD, PsbE, PsbF, PsbH, PsbI, PsbJ, PsbK, PsbL, PsbM, PsbT, PsbX, PsbY, PsbZ, Psb30/Ycf12, at least 3 peripheral proteins of the oxygen-evolving complex and a large number of cofactors. It forms dimeric complexes. The D1/D2 heterodimer binds P680, chlorophylls that are the primary electron donor of PSII, and subsequent electron acceptors. It shares a non-heme iron and each subunit binds pheophytin, quinone, additional chlorophylls, carotenoids and lipids. There is also a Cl(-1) ion associated with D1 and D2, which is required for oxygen evolution. The PSII complex binds additional chlorophylls, carotenoids and specific lipids. is required as a cofactor.

It is found in the plastid. It localises to the chloroplast thylakoid membrane. It carries out the reaction 2 a plastoquinone + 4 hnu + 2 H2O = 2 a plastoquinol + O2. In terms of biological role, photosystem II (PSII) is a light-driven water:plastoquinone oxidoreductase that uses light energy to abstract electrons from H(2)O, generating O(2) and a proton gradient subsequently used for ATP formation. It consists of a core antenna complex that captures photons, and an electron transfer chain that converts photonic excitation into a charge separation. The D1/D2 (PsbA/PsbD) reaction center heterodimer binds P680, the primary electron donor of PSII as well as several subsequent electron acceptors. D2 is needed for assembly of a stable PSII complex. This chain is Photosystem II D2 protein, found in Jasminum nudiflorum (Winter jasmine).